Consider the following 102-residue polypeptide: MFAIIETGGKQIKVEEGQEIYVEKLDVNEGDAFTFDKVLFVGGDAVKVGAPTVEGATVSATVNKQGRGKKITVFTYRRRKDSKRKKGHRQPYTKLTIDKINA.

Residues 79–91 show a composition bias toward basic residues; the sequence is RKDSKRKKGHRQP. The segment at 79 to 102 is disordered; that stretch reads RKDSKRKKGHRQPYTKLTIDKINA.

This sequence belongs to the bacterial ribosomal protein bL21 family. As to quaternary structure, part of the 50S ribosomal subunit. Contacts protein L20.

This protein binds to 23S rRNA in the presence of protein L20. This chain is Large ribosomal subunit protein bL21, found in Staphylococcus carnosus (strain TM300).